The chain runs to 431 residues: Glutamate-1-semialdehyde 2,1-aminomutase (431 aa).

Residue Lys-269 is modified to N6-(pyridoxal phosphate)lysine.

This sequence belongs to the class-III pyridoxal-phosphate-dependent aminotransferase family. HemL subfamily. In terms of assembly, homodimer. Requires pyridoxal 5'-phosphate as cofactor.

The protein localises to the cytoplasm. The catalysed reaction is (S)-4-amino-5-oxopentanoate = 5-aminolevulinate. It functions in the pathway porphyrin-containing compound metabolism; protoporphyrin-IX biosynthesis; 5-aminolevulinate from L-glutamyl-tRNA(Glu): step 2/2. The protein operates within porphyrin-containing compound metabolism; chlorophyll biosynthesis. This is Glutamate-1-semialdehyde 2,1-aminomutase from Chlorobium phaeovibrioides (strain DSM 265 / 1930) (Prosthecochloris vibrioformis (strain DSM 265)).